The primary structure comprises 719 residues: MTEPTITDDIIKAHGFTDDEYAEVNKILGRAPNYTEMGIFSAMWNEHCSYKSSKKWLRTLPTEGPQVICGPGENAGIVDIGDGQCVVFKMESHNHPSYIEPYQGAATGVGGILRDVFTMGARPIAAMNSLSFGEVAHPKTRQLVHGVVEGVGGYGNCFGVPTIGGEVRFHPAYNGNCLVNAFAAGLADTDKIFYSAASGVGMPVVYLGAKTGRDGVGGATMASAEFDDTIEEKRPTVQVGDPFTEKRLLEATLELMASGAVISIQDMGAAGLTCSAVEMGDKGGLGIRLNLDAVPIREDAMTAYEMMLSESQERMLMVLKPELEDTARAIFEKWDLDFAVVGETIPEDRFVIVHNGETKADLPLSKLASTAPEYDRPWVPTDPAHDMDAVPEVDPIDALRALLFSPNYCSRQWVYQQYDHQVMGDTVMSPGLGAGVVRVHGTDKALAFTSDVTPRYVKANPVEGGKQAVAEAYRNLTAVGAKPLATTDNMNFGNPEKPEIMGQFVGAIKGIGEACLALDTPIVSGNVSLYNETDGTGILPTPTIGAVGLLSSMDDLIAGTARDGHVLLLVGDTNGHLGQSALLAEVFNREDGDAPHVDLGAEKRNGDFIRDNRDWIGACTDLSDGGLALAAFEVAHAAGCGITLDVGDTATLFGEDQARYLISTSFDAAEALMVAAGRAGVPLATVGKVGGASLRIGTSEAPLADLSATYTNAFSQTFA.

Histidine 47 is an active-site residue. ATP-binding residues include tyrosine 50 and lysine 89. Mg(2+) is bound at residue glutamate 91. Residues 92 to 95 and arginine 114 each bind substrate; that span reads SHNH. Histidine 93 acts as the Proton acceptor in catalysis. Residue aspartate 115 participates in Mg(2+) binding. A substrate-binding site is contributed by glutamine 238. Aspartate 266 is a binding site for Mg(2+). A substrate-binding site is contributed by 310-312; that stretch reads ESQ. The ATP site is built by aspartate 488 and glycine 525. Asparagine 526 is a Mg(2+) binding site. Serine 528 contacts substrate.

The protein belongs to the FGAMS family. Monomer. Part of the FGAM synthase complex composed of 1 PurL, 1 PurQ and 2 PurS subunits.

It localises to the cytoplasm. The catalysed reaction is N(2)-formyl-N(1)-(5-phospho-beta-D-ribosyl)glycinamide + L-glutamine + ATP + H2O = 2-formamido-N(1)-(5-O-phospho-beta-D-ribosyl)acetamidine + L-glutamate + ADP + phosphate + H(+). It functions in the pathway purine metabolism; IMP biosynthesis via de novo pathway; 5-amino-1-(5-phospho-D-ribosyl)imidazole from N(2)-formyl-N(1)-(5-phospho-D-ribosyl)glycinamide: step 1/2. In terms of biological role, part of the phosphoribosylformylglycinamidine synthase complex involved in the purines biosynthetic pathway. Catalyzes the ATP-dependent conversion of formylglycinamide ribonucleotide (FGAR) and glutamine to yield formylglycinamidine ribonucleotide (FGAM) and glutamate. The FGAM synthase complex is composed of three subunits. PurQ produces an ammonia molecule by converting glutamine to glutamate. PurL transfers the ammonia molecule to FGAR to form FGAM in an ATP-dependent manner. PurS interacts with PurQ and PurL and is thought to assist in the transfer of the ammonia molecule from PurQ to PurL. This Jannaschia sp. (strain CCS1) protein is Phosphoribosylformylglycinamidine synthase subunit PurL.